Reading from the N-terminus, the 126-residue chain is Histone H2B type 1-K (126 aa).

A compositionally biased stretch (low complexity) spans 1 to 12 (MPEPAKSAPAPK). The disordered stretch occupies residues 1 to 36 (MPEPAKSAPAPKKGSKKAVTKAQKKDGKKRKRSRKE). P2 carries the post-translational modification N-acetylproline. E3 carries the ADP-ribosyl glutamic acid modification. K6 is subject to N6-(2-hydroxyisobutyryl)lysine; alternate. K6 carries the post-translational modification N6-(beta-hydroxybutyryl)lysine; alternate. K6 bears the N6-acetyllysine; alternate mark. K6 carries the post-translational modification N6-butyryllysine; alternate. K6 carries the N6-crotonyllysine; alternate modification. K6 carries the N6-lactoyllysine; alternate modification. A Glycyl lysine isopeptide (Lys-Gly) (interchain with G-Cter in SUMO2); alternate cross-link involves residue K6. The residue at position 7 (S7) is an ADP-ribosylserine. An N6-(beta-hydroxybutyryl)lysine; alternate modification is found at K12. N6-acetyllysine; alternate is present on residues K12 and K13. An N6-crotonyllysine; alternate mark is found at K12 and K13. At K12 the chain carries N6-lactoyllysine; alternate. Residue K13 is modified to N6-(2-hydroxyisobutyryl)lysine; alternate. Position 15 is a phosphoserine; by STK4/MST1 (S15). N6-acetyllysine; alternate occurs at positions 16, 17, 21, and 24. An N6-crotonyllysine; alternate mark is found at K16, K17, K21, and K24. 4 positions are modified to N6-lactoyllysine; alternate: K16, K17, K21, and K24. An N6-(beta-hydroxybutyryl)lysine; alternate mark is found at K17 and K21. K17 bears the N6-glutaryllysine; alternate mark. Residues K21 and K24 each carry the N6-(2-hydroxyisobutyryl)lysine; alternate modification. K21 is subject to N6-butyryllysine; alternate. K21 is covalently cross-linked (Glycyl lysine isopeptide (Lys-Gly) (interchain with G-Cter in SUMO2); alternate). K25 bears the N6-(2-hydroxyisobutyryl)lysine mark. Position 35 is an N6-(2-hydroxyisobutyryl)lysine; alternate (K35). An N6-(beta-hydroxybutyryl)lysine; alternate modification is found at K35. The residue at position 35 (K35) is an N6-crotonyllysine; alternate. K35 is subject to N6-glutaryllysine; alternate. K35 carries the N6-succinyllysine; alternate modification. K35 is covalently cross-linked (Glycyl lysine isopeptide (Lys-Gly) (interchain with G-Cter in ubiquitin); alternate). The residue at position 36 (E36) is a PolyADP-ribosyl glutamic acid. S37 is modified (phosphoserine; by AMPK). N6-(2-hydroxyisobutyryl)lysine; alternate occurs at positions 44, 47, and 58. N6-lactoyllysine; alternate is present on K44. Residues K44 and K47 each carry the N6-glutaryllysine; alternate modification. At K47 the chain carries N6-methyllysine; alternate. K58 is modified (N6,N6-dimethyllysine; alternate). Dimethylated arginine is present on R80. K86 carries the post-translational modification N6-(2-hydroxyisobutyryl)lysine; alternate. An N6-(beta-hydroxybutyryl)lysine; alternate modification is found at K86. N6-acetyllysine; alternate is present on K86. N6-lactoyllysine; alternate is present on K86. N6,N6,N6-trimethyllysine; alternate is present on K86. 2 positions are modified to omega-N-methylarginine: R87 and R93. At K109 the chain carries N6-(2-hydroxyisobutyryl)lysine; alternate. K109 is subject to N6-lactoyllysine; alternate. K109 is subject to N6-glutaryllysine; alternate. K109 carries the post-translational modification N6-methyllysine; alternate. O-linked (GlcNAc) serine glycosylation is present at S113. The residue at position 116 (T116) is a Phosphothreonine. 2 positions are modified to N6-(2-hydroxyisobutyryl)lysine; alternate: K117 and K121. 2 positions are modified to N6-(beta-hydroxybutyryl)lysine; alternate: K117 and K121. 2 positions are modified to N6-lactoyllysine; alternate: K117 and K121. N6-glutaryllysine; alternate is present on residues K117 and K121. N6-succinyllysine; alternate is present on residues K117 and K121. Residue K117 is modified to N6-malonyllysine; alternate. The residue at position 117 (K117) is an N6-methylated lysine; alternate. Residue K121 forms a Glycyl lysine isopeptide (Lys-Gly) (interchain with G-Cter in ubiquitin); alternate linkage.

Belongs to the histone H2B family. The nucleosome is a histone octamer containing two molecules each of H2A, H2B, H3 and H4 assembled in one H3-H4 heterotetramer and two H2A-H2B heterodimers. The octamer wraps approximately 147 bp of DNA. Post-translationally, monoubiquitination at Lys-35 (H2BK34Ub) by the MSL1/MSL2 dimer is required for histone H3 'Lys-4' (H3K4me) and 'Lys-79' (H3K79me) methylation and transcription activation at specific gene loci, such as HOXA9 and MEIS1 loci. Similarly, monoubiquitination at Lys-121 (H2BK120Ub) by the RNF20/40 complex gives a specific tag for epigenetic transcriptional activation and is also prerequisite for histone H3 'Lys-4' and 'Lys-79' methylation. It also functions cooperatively with the FACT dimer to stimulate elongation by RNA polymerase II. H2BK120Ub also acts as a regulator of mRNA splicing: deubiquitination by USP49 is required for efficient cotranscriptional splicing of a large set of exons. In terms of processing, phosphorylation at Ser-37 (H2BS36ph) by AMPK in response to stress promotes transcription. Phosphorylated on Ser-15 (H2BS14ph) by STK4/MST1 during apoptosis; which facilitates apoptotic chromatin condensation. Also phosphorylated on Ser-15 in response to DNA double strand breaks (DSBs), and in correlation with somatic hypermutation and immunoglobulin class-switch recombination. GlcNAcylation at Ser-113 promotes monoubiquitination of Lys-121. It fluctuates in response to extracellular glucose, and associates with transcribed genes. Post-translationally, ADP-ribosylated by PARP1 or PARP2 on Ser-7 (H2BS6ADPr) in response to DNA damage. H2BS6ADPr promotes recruitment of CHD1L. Mono-ADP-ribosylated on Glu-3 (H2BE2ADPr) by PARP3 in response to single-strand breaks. Poly ADP-ribosylation on Glu-36 (H2BE35ADPr) by PARP1 regulates adipogenesis: it inhibits phosphorylation at Ser-37 (H2BS36ph), thereby blocking expression of pro-adipogenetic genes. In terms of processing, crotonylation (Kcr) is specifically present in male germ cells and marks testis-specific genes in post-meiotic cells, including X-linked genes that escape sex chromosome inactivation in haploid cells. Crotonylation marks active promoters and enhancers and confers resistance to transcriptional repressors. It is also associated with post-meiotically activated genes on autosomes. Lactylated in macrophages by EP300/P300 by using lactoyl-CoA directly derived from endogenous or exogenous lactate, leading to stimulates gene transcription.

It is found in the nucleus. The protein resides in the chromosome. Functionally, core component of nucleosome. Nucleosomes wrap and compact DNA into chromatin, limiting DNA accessibility to the cellular machineries which require DNA as a template. Histones thereby play a central role in transcription regulation, DNA repair, DNA replication and chromosomal stability. DNA accessibility is regulated via a complex set of post-translational modifications of histones, also called histone code, and nucleosome remodeling. In terms of biological role, has broad antibacterial activity. May contribute to the formation of the functional antimicrobial barrier of the colonic epithelium, and to the bactericidal activity of amniotic fluid. The sequence is that of Histone H2B type 1-K from Homo sapiens (Human).